The chain runs to 681 residues: Phosphomethylpyrimidine synthase (681 aa).

A compositionally biased stretch (polar residues) spans 1–13 (MSNNTTSLPAENS). Residues 1–29 (MSNNTTSLPAENSSHPRKGTPIRKKQREE) form a disordered region. Residues 15-25 (HPRKGTPIRKK) are compositionally biased toward basic residues. Substrate is bound by residues asparagine 254, methionine 283, tyrosine 312, histidine 348, 368–370 (SRG), 409–412 (DGLR), and glutamate 448. Residue histidine 452 participates in Zn(2+) binding. Tyrosine 475 contributes to the substrate binding site. Position 516 (histidine 516) interacts with Zn(2+). [4Fe-4S] cluster is bound by residues cysteine 596, cysteine 599, and cysteine 604. Positions 658–667 (FRSRGSELYH) are enriched in basic and acidic residues. The segment at 658-681 (FRSRGSELYHRPANLSAEANNEPT) is disordered.

The protein belongs to the ThiC family. Homodimer. Requires [4Fe-4S] cluster as cofactor.

The enzyme catalyses 5-amino-1-(5-phospho-beta-D-ribosyl)imidazole + S-adenosyl-L-methionine = 4-amino-2-methyl-5-(phosphooxymethyl)pyrimidine + CO + 5'-deoxyadenosine + formate + L-methionine + 3 H(+). It participates in cofactor biosynthesis; thiamine diphosphate biosynthesis. Its function is as follows. Catalyzes the synthesis of the hydroxymethylpyrimidine phosphate (HMP-P) moiety of thiamine from aminoimidazole ribotide (AIR) in a radical S-adenosyl-L-methionine (SAM)-dependent reaction. The chain is Phosphomethylpyrimidine synthase from Yersinia pseudotuberculosis serotype I (strain IP32953).